A 299-amino-acid chain; its full sequence is 4-diphosphocytidyl-2-C-methyl-D-erythritol kinase (299 aa).

Lys-19 is a catalytic residue. 110 to 120 serves as a coordination point for ATP; it reads PVASGIGGGSA. The active site involves Asp-152.

The protein belongs to the GHMP kinase family. IspE subfamily.

The enzyme catalyses 4-CDP-2-C-methyl-D-erythritol + ATP = 4-CDP-2-C-methyl-D-erythritol 2-phosphate + ADP + H(+). Its pathway is isoprenoid biosynthesis; isopentenyl diphosphate biosynthesis via DXP pathway; isopentenyl diphosphate from 1-deoxy-D-xylulose 5-phosphate: step 3/6. Functionally, catalyzes the phosphorylation of the position 2 hydroxy group of 4-diphosphocytidyl-2C-methyl-D-erythritol. In Agrobacterium fabrum (strain C58 / ATCC 33970) (Agrobacterium tumefaciens (strain C58)), this protein is 4-diphosphocytidyl-2-C-methyl-D-erythritol kinase.